The sequence spans 502 residues: Cysteine--tRNA ligase (502 aa).

Cysteine 30 lines the Zn(2+) pocket. The 'HIGH' region signature appears at 32–42 (PTIYDYAHIGN). The Zn(2+) site is built by cysteine 224, histidine 263, and glutamate 267. The 'KMSKS' region signature appears at 296-300 (KMSKS). Lysine 299 lines the ATP pocket.

It belongs to the class-I aminoacyl-tRNA synthetase family. Monomer. The cofactor is Zn(2+).

It localises to the cytoplasm. The catalysed reaction is tRNA(Cys) + L-cysteine + ATP = L-cysteinyl-tRNA(Cys) + AMP + diphosphate. The chain is Cysteine--tRNA ligase from Bartonella quintana (strain Toulouse) (Rochalimaea quintana).